Reading from the N-terminus, the 445-residue chain is Methylenetetrahydrofolate--tRNA-(uracil-5-)-methyltransferase TrmFO (445 aa).

Residue 9–14 coordinates FAD; that stretch reads GGGLAG.

It belongs to the MnmG family. TrmFO subfamily. Requires FAD as cofactor.

The protein localises to the cytoplasm. The catalysed reaction is uridine(54) in tRNA + (6R)-5,10-methylene-5,6,7,8-tetrahydrofolate + NADH + H(+) = 5-methyluridine(54) in tRNA + (6S)-5,6,7,8-tetrahydrofolate + NAD(+). It carries out the reaction uridine(54) in tRNA + (6R)-5,10-methylene-5,6,7,8-tetrahydrofolate + NADPH + H(+) = 5-methyluridine(54) in tRNA + (6S)-5,6,7,8-tetrahydrofolate + NADP(+). Catalyzes the folate-dependent formation of 5-methyl-uridine at position 54 (M-5-U54) in all tRNAs. The polypeptide is Methylenetetrahydrofolate--tRNA-(uracil-5-)-methyltransferase TrmFO (Aquifex aeolicus (strain VF5)).